The primary structure comprises 197 residues: Peptidyl-tRNA hydrolase (197 aa).

Y23 provides a ligand contact to tRNA. The Proton acceptor role is filled by H28. Positions 73, 75, and 121 each coordinate tRNA.

Belongs to the PTH family. Monomer.

The protein resides in the cytoplasm. It catalyses the reaction an N-acyl-L-alpha-aminoacyl-tRNA + H2O = an N-acyl-L-amino acid + a tRNA + H(+). Functionally, hydrolyzes ribosome-free peptidyl-tRNAs (with 1 or more amino acids incorporated), which drop off the ribosome during protein synthesis, or as a result of ribosome stalling. In terms of biological role, catalyzes the release of premature peptidyl moieties from peptidyl-tRNA molecules trapped in stalled 50S ribosomal subunits, and thus maintains levels of free tRNAs and 50S ribosomes. This chain is Peptidyl-tRNA hydrolase, found in Frankia casuarinae (strain DSM 45818 / CECT 9043 / HFP020203 / CcI3).